The following is a 148-amino-acid chain: Nucleoside diphosphate kinase (148 aa).

ATP is bound by residues lysine 9, phenylalanine 57, arginine 85, threonine 91, arginine 102, and asparagine 112. The residue at position 91 (threonine 91) is a Phosphothreonine. Histidine 115 (pros-phosphohistidine intermediate) is an active-site residue. Serine 122 is modified (phosphoserine).

The protein belongs to the NDK family. Homotetramer. The cofactor is Mg(2+).

Its subcellular location is the cytoplasm. The enzyme catalyses a 2'-deoxyribonucleoside 5'-diphosphate + ATP = a 2'-deoxyribonucleoside 5'-triphosphate + ADP. It carries out the reaction a ribonucleoside 5'-diphosphate + ATP = a ribonucleoside 5'-triphosphate + ADP. Its function is as follows. Major role in the synthesis of nucleoside triphosphates other than ATP. The ATP gamma phosphate is transferred to the NDP beta phosphate via a ping-pong mechanism, using a phosphorylated active-site intermediate. The chain is Nucleoside diphosphate kinase from Bacillus cereus (strain ATCC 10987 / NRS 248).